A 72-amino-acid chain; its full sequence is Translation initiation factor IF-1 (72 aa).

Residues 1–72 form the S1-like domain; sequence MAREDLIEVE…SRGRITYRKK (72 aa).

This sequence belongs to the IF-1 family. Component of the 30S ribosomal translation pre-initiation complex which assembles on the 30S ribosome in the order IF-2 and IF-3, IF-1 and N-formylmethionyl-tRNA(fMet); mRNA recruitment can occur at any time during PIC assembly.

The protein resides in the cytoplasm. One of the essential components for the initiation of protein synthesis. Stabilizes the binding of IF-2 and IF-3 on the 30S subunit to which N-formylmethionyl-tRNA(fMet) subsequently binds. Helps modulate mRNA selection, yielding the 30S pre-initiation complex (PIC). Upon addition of the 50S ribosomal subunit IF-1, IF-2 and IF-3 are released leaving the mature 70S translation initiation complex. The protein is Translation initiation factor IF-1 of Acholeplasma laidlawii (strain PG-8A).